Here is a 207-residue protein sequence, read N- to C-terminus: Ribosomal RNA small subunit methyltransferase G (207 aa).

S-adenosyl-L-methionine contacts are provided by residues glycine 73, leucine 78, 124–125 (VE), and arginine 139.

It belongs to the methyltransferase superfamily. RNA methyltransferase RsmG family.

The protein resides in the cytoplasm. The catalysed reaction is guanosine(527) in 16S rRNA + S-adenosyl-L-methionine = N(7)-methylguanosine(527) in 16S rRNA + S-adenosyl-L-homocysteine. In terms of biological role, specifically methylates the N7 position of guanine in position 527 of 16S rRNA. The sequence is that of Ribosomal RNA small subunit methyltransferase G from Klebsiella pneumoniae subsp. pneumoniae (strain ATCC 700721 / MGH 78578).